A 317-amino-acid polypeptide reads, in one-letter code: Testis-specific Y-encoded protein 1 (317 aa).

Disordered regions lie at residues 1 to 39 (MSRP…FQVV) and 91 to 118 (DEEQ…PGGP). Basic and acidic residues-rich tracts occupy residues 15–26 (QGQEERERRSEE) and 95–112 (EQRP…EQGQ).

This sequence belongs to the nucleosome assembly protein (NAP) family. In terms of processing, phosphorylated. As to expression, testis. Probably in spermatogonia.

It localises to the cytoplasm. The protein resides in the nucleus. In terms of biological role, may be involved in sperm differentiation and proliferation. The polypeptide is Testis-specific Y-encoded protein 1 (TSPY1) (Bos taurus (Bovine)).